The following is a 358-amino-acid chain: Methionine aminopeptidase 2 (358 aa).

Residue histidine 109 coordinates substrate. A divalent metal cation contacts are provided by aspartate 130, aspartate 141, and histidine 210. Substrate is bound at residue histidine 218. A divalent metal cation contacts are provided by glutamate 243 and glutamate 339.

This sequence belongs to the peptidase M24A family. Methionine aminopeptidase eukaryotic type 2 subfamily. The cofactor is Co(2+). Zn(2+) is required as a cofactor. Requires Mn(2+) as cofactor. Fe(2+) serves as cofactor.

It localises to the cytoplasm. It carries out the reaction Release of N-terminal amino acids, preferentially methionine, from peptides and arylamides.. In terms of biological role, cotranslationally removes the N-terminal methionine from nascent proteins. The N-terminal methionine is often cleaved when the second residue in the primary sequence is small and uncharged (Met-Ala-, Cys, Gly, Pro, Ser, Thr, or Val). This is Methionine aminopeptidase 2 from Encephalitozoon cuniculi (strain GB-M1) (Microsporidian parasite).